Here is a 296-residue protein sequence, read N- to C-terminus: 4-hydroxybenzoate octaprenyltransferase (296 aa).

Transmembrane regions (helical) follow at residues 28-48 (PIGI…AGLG), 52-72 (LANV…GCCI), 102-122 (ALAL…CTNS), 145-167 (TYYP…FTAA), 174-196 (SAWL…YAMV), 219-239 (MIIL…GSRF), 241-261 (LGGW…WEYW), and 275-295 (FLHN…DYAL).

The protein belongs to the UbiA prenyltransferase family. It depends on Mg(2+) as a cofactor.

It localises to the cell inner membrane. The catalysed reaction is all-trans-octaprenyl diphosphate + 4-hydroxybenzoate = 4-hydroxy-3-(all-trans-octaprenyl)benzoate + diphosphate. It functions in the pathway cofactor biosynthesis; ubiquinone biosynthesis. Functionally, catalyzes the prenylation of para-hydroxybenzoate (PHB) with an all-trans polyprenyl group. Mediates the second step in the final reaction sequence of ubiquinone-8 (UQ-8) biosynthesis, which is the condensation of the polyisoprenoid side chain with PHB, generating the first membrane-bound Q intermediate 3-octaprenyl-4-hydroxybenzoate. The chain is 4-hydroxybenzoate octaprenyltransferase from Pseudomonas putida (strain W619).